Here is a 280-residue protein sequence, read N- to C-terminus: Four and a half LIM domains protein 3 (280 aa).

N-acetylserine is present on serine 2. The C4-type zinc-finger motif lies at 7-31 (CAKCSESLYGRKYIQTDDGPYCVPC). LIM zinc-binding domains are found at residues 40–92 (CAEC…CNDC) and 101–153 (CSAC…CVPC). Position 157 is an N6-acetyllysine (lysine 157). 2 consecutive LIM zinc-binding domains span residues 162-212 (CARC…CVTC) and 221-275 (CSSC…CQGC). Lysine 235 bears the N6-acetyllysine mark.

In terms of assembly, interacts with SOX15; the interaction recruits FHL3 to FOXK1 promoters where it acts as a transcriptional coactivator of FOXK1.

The protein resides in the nucleus. The protein localises to the cytoplasm. Functionally, recruited by SOX15 to FOXK1 promoters where it acts as a transcriptional coactivator of FOXK1. This Bos taurus (Bovine) protein is Four and a half LIM domains protein 3 (FHL3).